The chain runs to 131 residues: D-ribose pyranase (131 aa).

H20 functions as the Proton donor in the catalytic mechanism. Residues D28, H98, and 120–122 (YSN) contribute to the substrate site.

This sequence belongs to the RbsD / FucU family. RbsD subfamily. Homodecamer.

It is found in the cytoplasm. It catalyses the reaction beta-D-ribopyranose = beta-D-ribofuranose. Its pathway is carbohydrate metabolism; D-ribose degradation; D-ribose 5-phosphate from beta-D-ribopyranose: step 1/2. In terms of biological role, catalyzes the interconversion of beta-pyran and beta-furan forms of D-ribose. The chain is D-ribose pyranase from Limosilactobacillus fermentum (strain NBRC 3956 / LMG 18251) (Lactobacillus fermentum).